Consider the following 317-residue polypeptide: MIIGTRGSQLALAQTENVARLLKERGVETSIKIIKTSGDRFTDRPLHAVSGGVGAFVRELDDVMLAGEIDIAVHSMKDMPTIRPEGLPTVAVLKRDTPFDILLTYDGTTLDELPEQAIIGTSSLRRTAQIRRYRPDLITQELRGNIDTRLRKLKEGQYDGILLAKAGLERMGWEIDGEILSPDFFCPSPNQGTVAVVTRADPEIEAAVSGLDHTESRIVTEIERILISELGGGCTTPIGSYAELTSDKQEIHIRAEVLSLDGKEDVRIDEFIPMLGGLEKARELGHRLVEMGGKRLAEEALLQISRNACGTENSFDY.

The residue at position 234 (C234) is an S-(dipyrrolylmethanemethyl)cysteine.

It belongs to the HMBS family. Dipyrromethane serves as cofactor.

The enzyme catalyses 4 porphobilinogen + H2O = hydroxymethylbilane + 4 NH4(+). Its pathway is porphyrin-containing compound metabolism; protoporphyrin-IX biosynthesis; coproporphyrinogen-III from 5-aminolevulinate: step 2/4. Its function is as follows. Tetrapolymerization of the monopyrrole PBG into the hydroxymethylbilane pre-uroporphyrinogen in several discrete steps. The polypeptide is Probable porphobilinogen deaminase (Methanosarcina acetivorans (strain ATCC 35395 / DSM 2834 / JCM 12185 / C2A)).